The sequence spans 1257 residues: MATLNEVYPVNYNVLSSDAFQQLDTTGFKSKYDEMIKAFEKKWKKGAKGKDLLDVAWTYITTGEIDPLNVIKGVLSVLTLIPEVGTVASAASTIVSFIWPKIFGDKPNAKNIFEELKPQIEALIQQDITNYQDAINQKKFDSLQKTINLYTVAIDNNDYVTAKTQLENLNSILTSDISIFIPEGYETGGLPYYAMVANAHILLLRDAIVNAEKLGFSDKEVDTHKKYIKMTIHNHTEAVIKAFLNGLDKFKSLDVNSYNKKANYIKGMTEMVLDLVALWPTFDPDHYQKEVEIEFTRTISSPIYQPVPKNMQNTSSSIVPSDLFHYQGDLVKLEFSTRTDNDGLAKIFTGIRNTFYKSPNTHETYHVDFSYNTQSSGNISRGSSNPIPIDLNNPIISTCIRNSFYKAIAGSSVLVNFKDGTQGYAFAQAPTGGAWDHSFIESDGAPEGHKLNYIYTSPGDTLRDFINVYTLISTPTINELSTEKIKGFPAEKGYIKNQGIMKYYGKPEYINGAQPVNLENQQTLIFEFHASKTAQYTIRIRYASTQGTKGYFRLDNQELQTLNIPTSHNGYVTGNIGENYDLYTIGSYTITEGNHTLQIQHNDKNGMVLDRIEFVPKDSLQDSPQDSPPEVHESTIIFDKSSPTIWSSNKHSYSHIHLEGSYTSQGSYPHNLLINLFHPTDPNRNHTIHVNNGDMNVDYGKDSVADGLNFNKITATIPSDAWYSGTITSMHLFNDNNFKTITPKFELSNELENITTQVNALFASSAQDTLASNVSDYWIEQVVMKVDALSDEVFGKEKKALRKLVNQAKRLSKIRNLLIGGNFDNLVAWYMGKDVVKESDHELFKSDHVLLPPPTFHPSYIFQKVEESKLKPNTRYTISGFIAHGEDVELVVSRYGQEIQKVMQVPYEEALPLTSESNSSCCVPNLNINETLADPHFFSYSIDVGSLEMEANPGIEFGLRIVKPTGMARVSNLEIREDRPLTAKEIRQVQRAARDWKQNYEQERTEITAIIQPVLNQINALYENEDWNGSIRSNVSYHDLEQIMLPTLLKTEEINCNYDHPAFLLKVYHWFMTDRIGEHGTILARFQEALDRAYTQLESRNLLHNGHFTTDTANWTIEGDAHHTILEDGRRVLRLPDWSSNATQTIEIEDFDLDQEYQLLIHAKGKGSITLQHGEENEYVETHTHHTNDFITSQNIPFTFKGNQIEVHITSEDGEFLIDHITVIEVSKTDTNTNIIENSPINTSMNSNVRVDIPRSL.

Belongs to the delta endotoxin family.

In terms of biological role, endotoxin with nematicidal activity. In Bacillus thuringiensis, this protein is Pesticidal crystal protein Cry12Aa (cry12Aa).